Here is a 192-residue protein sequence, read N- to C-terminus: Imidazoleglycerol-phosphate dehydratase (192 aa).

The protein belongs to the imidazoleglycerol-phosphate dehydratase family.

The protein resides in the cytoplasm. It catalyses the reaction D-erythro-1-(imidazol-4-yl)glycerol 3-phosphate = 3-(imidazol-4-yl)-2-oxopropyl phosphate + H2O. Its pathway is amino-acid biosynthesis; L-histidine biosynthesis; L-histidine from 5-phospho-alpha-D-ribose 1-diphosphate: step 6/9. This chain is Imidazoleglycerol-phosphate dehydratase, found in Hydrogenobaculum sp. (strain Y04AAS1).